The chain runs to 1054 residues: MLQKREKVLLLRTFQGRTLRIVREHYLRPSVPCNSPLCPQPATCRNDGKLLSAEVTHYVIPDWKVVQDYLEVLEFPELKGIIFMQTACQAVQHQRGRRQYNKLRNLLKDARHDCVLFANEFQQHCYLPREKGEAMEKWQTRSIYNSAVWYYHHCEDRMPIVMVTEDEEAIQQYGSETEGVFVISFKNYLDNFWPDLKAAHELCDSIIQSRRERESESQETHGKEYPEHLPLEVLEAGIKSGRYIQGILNVNKHRAQIEAFVRLQGASSKDSGLVSDILIHGSKARNRSIHGDVVVVELLPKSEWKGRTAALCENDSEDKASGESPSEPMPTGRVVGILQKNWRDYVVTFPSKEEVQSQGKNAQKILVTPWDYRIPKIRISTQQAEALQDFRVVVRIDSWETTSVYPNGHFVRVLGRIGDLEGEIATILVENSINVVPFSEAQMCEMPVNTAENPWKVSPKEEQERRDLRSTHLVFSIDPKGCEDVDDALSVRTLNNGNLELGVHIADVTHFVAPNSYIDVEARTRATTYYLADRRYDMLPSILSADLCSLLGGVDRYAVSVMWELDKTSYEIKKVWYGRTIIRSAYKLFYEAAQELLDGNFSIVDDIPEFKTLEEQNRQAKLEELVWAIGKLTDIARHIRAKRDRCGALELEGVEVRVQLDDKKNIHDLIPKQPLEVHETVAECMILANHWVAKKIWESFPHQALLRQHPPPHQEFFSELRECAKAKGFFIDTRSNKTLADSLDSANDPSDPLVNKLLRSMATQAMSNALYFSTGSCAEEEFHHYGLALDKYTHFTSPIRRYSDIVVHRLLMAAISKDKKVEIKENLFSNKNLEELCRHINNRNRAAQRSQKQSTELFQCMYFKDRDPETEERCVVDGIIYSIRTNGVLVFIPRFGIKGAAYLKNKDGLVISCGPEGSSEWKPGSLQRSQNKIISTTAGGQSVTFHLFDHVTVRISVQPSRCHSDMIRLEIVSNKPYMMPNTELCHQSSLLLKSELVKEVTRSVEEAQLAQEVKGKVIEEEHQEYRQTKGRSLYTLLEEIRDLALLDVSDSYAM.

In terms of domain architecture, CSD1 spans 236–313 (AGIKSGRYIQ…WKGRTAALCE (78 aa)). The interval 313-332 (ENDSEDKASGESPSEPMPTG) is disordered. Positions 365-431 (ILVTPWDYRI…GEIATILVEN (67 aa)) constitute a CSD2 domain. The RNB domain occupies 465–816 (RRDLRSTHLV…VHRLLMAAIS (352 aa)). At Ser-989 the chain carries Phosphoserine.

It belongs to the RNR ribonuclease family. In terms of assembly, component of the RNA exosome complex. The catalytically inactive RNA exosome core (Exo-9) complex is believed to associate with catalytic subunits EXOSC10, and DIS3 or DIS3L in cytoplasmic- and nuclear-specific RNA exosome complex forms. Mg(2+) is required as a cofactor.

The protein localises to the cytoplasm. It carries out the reaction Exonucleolytic cleavage in the 3'- to 5'-direction to yield nucleoside 5'-phosphates.. Catalytic component of the RNA exosome complex which has 3'-&gt;5' exoribonuclease activity and participates in a multitude of cellular RNA processing and degradation events. In the cytoplasm, the RNA exosome complex is involved in general mRNA turnover and specifically degrades inherently unstable mRNAs containing AU-rich elements (AREs) within their 3' untranslated regions, and in RNA surveillance pathways, preventing translation of aberrant mRNAs. It seems to be involved in degradation of histone mRNA. This chain is DIS3-like exonuclease 1 (Dis3l), found in Rattus norvegicus (Rat).